The following is a 51-amino-acid chain: Protein HokD (51 aa).

Residues 5-25 form a helical membrane-spanning segment; the sequence is KAMLIALIVICLTVIVTALVT.

This sequence belongs to the Hok/Gef family.

Its subcellular location is the cell inner membrane. In terms of biological role, toxic component of a type I toxin-antitoxin (TA) system. When overexpressed kills cells within minutes; causes collapse of the transmembrane potential and arrest of respiration. Its toxic effect is probably neutralized by an antisense antitoxin Sok RNA. This is Protein HokD (hokD) from Escherichia coli O157:H7.